The sequence spans 358 residues: Type II methyltransferase M.HpaII (358 aa).

Residues 32–356 (FTFIDLFAGI…KKILEKLGNL (325 aa)) form the SAM-dependent MTase C5-type domain. Cys-103 is an active-site residue.

The protein belongs to the class I-like SAM-binding methyltransferase superfamily. C5-methyltransferase family. As to quaternary structure, monomer.

The catalysed reaction is a 2'-deoxycytidine in DNA + S-adenosyl-L-methionine = a 5-methyl-2'-deoxycytidine in DNA + S-adenosyl-L-homocysteine + H(+). Its function is as follows. A methylase that recognizes the double-stranded sequence 5'-CCGG-3', methylates C-2 on both strands, and protects the DNA from cleavage by the HpaII endonuclease. This chain is Type II methyltransferase M.HpaII, found in Haemophilus parainfluenzae.